Here is a 339-residue protein sequence, read N- to C-terminus: Ketol-acid reductoisomerase (NADP(+)) (339 aa).

Residues Met1–Thr182 enclose the KARI N-terminal Rossmann domain. NADP(+) is bound by residues Tyr24–Gln27, Arg48, Ser51, and Asp83–Gln86. His108 is a catalytic residue. Gly134 contacts NADP(+). One can recognise a KARI C-terminal knotted domain in the interval Ser183–Ile328. 4 residues coordinate Mg(2+): Asp191, Glu195, Glu227, and Glu231. Residue Ser252 participates in substrate binding.

The protein belongs to the ketol-acid reductoisomerase family. Mg(2+) serves as cofactor.

It catalyses the reaction (2R)-2,3-dihydroxy-3-methylbutanoate + NADP(+) = (2S)-2-acetolactate + NADPH + H(+). It carries out the reaction (2R,3R)-2,3-dihydroxy-3-methylpentanoate + NADP(+) = (S)-2-ethyl-2-hydroxy-3-oxobutanoate + NADPH + H(+). It functions in the pathway amino-acid biosynthesis; L-isoleucine biosynthesis; L-isoleucine from 2-oxobutanoate: step 2/4. The protein operates within amino-acid biosynthesis; L-valine biosynthesis; L-valine from pyruvate: step 2/4. Functionally, involved in the biosynthesis of branched-chain amino acids (BCAA). Catalyzes an alkyl-migration followed by a ketol-acid reduction of (S)-2-acetolactate (S2AL) to yield (R)-2,3-dihydroxy-isovalerate. In the isomerase reaction, S2AL is rearranged via a Mg-dependent methyl migration to produce 3-hydroxy-3-methyl-2-ketobutyrate (HMKB). In the reductase reaction, this 2-ketoacid undergoes a metal-dependent reduction by NADPH to yield (R)-2,3-dihydroxy-isovalerate. In Gluconacetobacter diazotrophicus (strain ATCC 49037 / DSM 5601 / CCUG 37298 / CIP 103539 / LMG 7603 / PAl5), this protein is Ketol-acid reductoisomerase (NADP(+)).